We begin with the raw amino-acid sequence, 333 residues long: Probable G-protein coupled receptor 33 (333 aa).

The Extracellular portion of the chain corresponds to 1-30 (MDLINSTDYLINASTLVRNSTQFLAPASKM). Residues Asn5, Asn12, and Asn19 are each glycosylated (N-linked (GlcNAc...) asparagine). A helical transmembrane segment spans residues 31 to 53 (IIALSLYISSIIGTITNGLYLWV). The Cytoplasmic portion of the chain corresponds to 54-64 (LRFKMKQTVNT). Residues 65 to 86 (LLFFHLILSYFISTMILPFMAT) traverse the membrane as a helical segment. Over 87 to 103 (SQLQDNHWNFGTALCKV) the chain is Extracellular. Residues Cys101 and Cys179 are joined by a disulfide bond. The helical transmembrane segment at 104 to 124 (FNGTLSLGMFTSVFFLSAIGL) threads the bilayer. Residues 125 to 143 (DRYLLTLHPVWSQQHRTPR) are Cytoplasmic-facing. A helical transmembrane segment spans residues 144-165 (WASSIVLGVWISAAALSIPYLI). At 166–209 (FRETHHDRKGKVTCQNNYAVSTNWESKEMQASRQWIHVACFISR) the chain is on the extracellular side. A helical transmembrane segment spans residues 210 to 230 (FLLGFLLPFFIIIFCYERVAS). Topologically, residues 231–246 (KVKERSLFKSSKPFKV) are cytoplasmic. The chain crosses the membrane as a helical span at residues 247-268 (MMTAIISFFVCWMPYHIHQGLL). Residues 269-283 (LTTNQSLLLELTLIL) lie on the Extracellular side of the membrane. Asn272 is a glycosylation site (N-linked (GlcNAc...) asparagine). The chain crosses the membrane as a helical span at residues 284 to 303 (TVLTTSFNTIFSPTLYLFVG). Residues 304–333 (ENFKKVFKKSILALFESTFSEDSSVERTQT) lie on the Cytoplasmic side of the membrane.

It belongs to the G-protein coupled receptor 1 family. As to expression, expressed in spleen, lung, heart, liver, kidney, pancreas, thymus, gonads and leukocytes.

The protein resides in the cell membrane. Orphan receptor; could be a chemoattractant receptor. The chain is Probable G-protein coupled receptor 33 (GPR33) from Homo sapiens (Human).